A 260-amino-acid chain; its full sequence is Type III pantothenate kinase (260 aa).

Asp6–Val13 contacts ATP. Gly107–Arg110 is a binding site for substrate. The Proton acceptor role is filled by Asp109. Asp129 serves as a coordination point for K(+). Thr132 is an ATP binding site. Substrate is bound at residue Thr184.

The protein belongs to the type III pantothenate kinase family. Homodimer. The cofactor is NH4(+). It depends on K(+) as a cofactor.

It is found in the cytoplasm. It catalyses the reaction (R)-pantothenate + ATP = (R)-4'-phosphopantothenate + ADP + H(+). It functions in the pathway cofactor biosynthesis; coenzyme A biosynthesis; CoA from (R)-pantothenate: step 1/5. Its function is as follows. Catalyzes the phosphorylation of pantothenate (Pan), the first step in CoA biosynthesis. The chain is Type III pantothenate kinase from Ruegeria sp. (strain TM1040) (Silicibacter sp.).